A 265-amino-acid chain; its full sequence is Signal peptidase I (265 aa).

Residues 1–19 (MQIDTKTNTNKTTAQEWKS) lie on the Cytoplasmic side of the membrane. The helical transmembrane segment at 20-40 (FAFVVCIALLIRILIMEPFTV) threads the bilayer. Residues 41–265 (PTGSMKATIL…IFRNLYNTDE (225 aa)) are Periplasmic-facing. Catalysis depends on residues Ser-44 and Lys-107.

This sequence belongs to the peptidase S26 family.

Its subcellular location is the cell inner membrane. The catalysed reaction is Cleavage of hydrophobic, N-terminal signal or leader sequences from secreted and periplasmic proteins.. The polypeptide is Signal peptidase I (lepB) (Rickettsia canadensis (strain McKiel)).